A 197-amino-acid chain; its full sequence is Inner membrane-spanning protein YciB (197 aa).

5 helical membrane passes run 36–56 (IYSATAMLIISSLVVYGALFL), 64–84 (GQWLTLIACLVFGGLTLTFHS), 90–110 (WKAPVVNWLFALGFAGSHFIG), 135–155 (LAWIAFFLFCGAANLFVAFTF), and 162–182 (FKVFGSLGMTVIFLVAQGVYL).

This sequence belongs to the YciB family.

The protein resides in the cell inner membrane. In terms of biological role, plays a role in cell envelope biogenesis, maintenance of cell envelope integrity and membrane homeostasis. The chain is Inner membrane-spanning protein YciB from Pseudomonas putida (strain ATCC 700007 / DSM 6899 / JCM 31910 / BCRC 17059 / LMG 24140 / F1).